The primary structure comprises 200 residues: Histone H1 (200 aa).

Residues Met-1 to Ala-14 show a composition bias toward low complexity. Disordered regions lie at residues Met-1–Thr-20 and Asp-78–Ala-200. An H15 domain is found at Thr-18 to Lys-93. Low complexity predominate over residues Lys-94 to Lys-116. The segment covering Lys-120–Pro-131 has biased composition (basic and acidic residues). The segment covering Thr-159–Lys-185 has biased composition (low complexity).

Belongs to the histone H1/H5 family.

Its subcellular location is the nucleus. It is found in the chromosome. Functionally, could act as an H1-type linker histone. The protein is Histone H1 (hhoA) of Emericella nidulans (strain FGSC A4 / ATCC 38163 / CBS 112.46 / NRRL 194 / M139) (Aspergillus nidulans).